The sequence spans 154 residues: Xanthine-guanine phosphoribosyltransferase (154 aa).

5-phospho-alpha-D-ribose 1-diphosphate is bound by residues 37-38, Arg69, and 88-96; these read RG and EDLVDSGDT. Arg69 contributes to the GMP binding site. Position 89 (Asp89) interacts with Mg(2+). Guanine contacts are provided by Asp92 and Ile135. Positions 92 and 135 each coordinate xanthine. GMP is bound by residues 92 to 96 and 134 to 135; these read DSGDT and WI.

It belongs to the purine/pyrimidine phosphoribosyltransferase family. XGPT subfamily. In terms of assembly, homotetramer. Mg(2+) serves as cofactor.

It is found in the cell inner membrane. It carries out the reaction GMP + diphosphate = guanine + 5-phospho-alpha-D-ribose 1-diphosphate. The enzyme catalyses XMP + diphosphate = xanthine + 5-phospho-alpha-D-ribose 1-diphosphate. The catalysed reaction is IMP + diphosphate = hypoxanthine + 5-phospho-alpha-D-ribose 1-diphosphate. Its pathway is purine metabolism; GMP biosynthesis via salvage pathway; GMP from guanine: step 1/1. The protein operates within purine metabolism; XMP biosynthesis via salvage pathway; XMP from xanthine: step 1/1. Functionally, purine salvage pathway enzyme that catalyzes the transfer of the ribosyl-5-phosphate group from 5-phospho-alpha-D-ribose 1-diphosphate (PRPP) to the N9 position of the 6-oxopurines guanine and xanthine to form the corresponding ribonucleotides GMP (guanosine 5'-monophosphate) and XMP (xanthosine 5'-monophosphate), with the release of PPi. To a lesser extent, also acts on hypoxanthine. The protein is Xanthine-guanine phosphoribosyltransferase of Vibrio campbellii (strain ATCC BAA-1116).